We begin with the raw amino-acid sequence, 239 residues long: UPF0173 metal-dependent hydrolase Msm_0779 (239 aa).

It belongs to the UPF0173 family.

This is UPF0173 metal-dependent hydrolase Msm_0779 from Methanobrevibacter smithii (strain ATCC 35061 / DSM 861 / OCM 144 / PS).